A 97-amino-acid chain; its full sequence is MKLRPLHDRVVIRRSEEETKTAGGIVLPGSAAEKPNRGEVVAVGTGRVLDNGEVRALAVKVGDKVVFGPYSGSNTVKVDGEDLLVMSENEILAVVEA.

The protein belongs to the GroES chaperonin family. As to quaternary structure, heptamer of 7 subunits arranged in a ring. Interacts with the chaperonin GroEL.

Its subcellular location is the cytoplasm. Its function is as follows. Together with the chaperonin GroEL, plays an essential role in assisting protein folding. The GroEL-GroES system forms a nano-cage that allows encapsulation of the non-native substrate proteins and provides a physical environment optimized to promote and accelerate protein folding. GroES binds to the apical surface of the GroEL ring, thereby capping the opening of the GroEL channel. The sequence is that of Co-chaperonin GroES from Stutzerimonas stutzeri (Pseudomonas stutzeri).